We begin with the raw amino-acid sequence, 220 residues long: Inner membrane-spanning protein YciB (220 aa).

6 helical membrane passes run 20 to 40, 57 to 77, 86 to 106, 123 to 143, 156 to 176, and 187 to 207; these read EVPP…FFFA, IGAP…IALA, LPIM…LTLW, LFGG…GYVF, KLTL…EIVW, and FKVW…MPLI.

It belongs to the YciB family.

The protein resides in the cell inner membrane. Functionally, plays a role in cell envelope biogenesis, maintenance of cell envelope integrity and membrane homeostasis. This is Inner membrane-spanning protein YciB from Brucella abortus (strain S19).